Here is a 97-residue protein sequence, read N- to C-terminus: Single insulin-like growth factor-binding domain protein-1 (97 aa).

The N-terminal stretch at 1-19 (MKTLFVFAVGIMLSMRASA) is a signal peptide. An IGFBP N-terminal domain is found at 20–96 (FTCPECRPEL…PEIVGTCVKI (77 aa)). Residue Thr-21 is glycosylated (O-linked (GalNAc...) threonine). Disulfide bonds link Cys-22-Cys-45, Cys-25-Cys-47, Cys-30-Cys-48, Cys-36-Cys-51, Cys-59-Cys-75, and Cys-69-Cys-93.

Expressed in hemocytes.

The protein localises to the secreted. Functionally, has a role in the innate immune system. The protein is Single insulin-like growth factor-binding domain protein-1 of Cupiennius salei (American wandering spider).